Reading from the N-terminus, the 442-residue chain is Pentatricopeptide repeat-containing protein At2g27800, mitochondrial (442 aa).

The transit peptide at 1–67 (MSATRSTFLG…SFLPSIHVRF (67 aa)) directs the protein to the mitochondrion. PPR repeat units follow at residues 206–236 (NENLYNSIIFYFTKAGKLIRAVNIFRHMVTS), 244–286 (TIRT…GIEP), 287–322 (DVFALNCLVKGYVLSLHVNDALRIFHQMSVVYDCEP), 323–357 (NSFTYDYLIHGLCAQGRTINARELLSEMKGKGFVP), 358–392 (NGKSYNSLVNAFALSGEIDDAVKCLWEMIENGRVV), and 393–427 (DFISYRTLVDESCRKGKYDEATRLLEMLREKQLVD).

Belongs to the PPR family. P subfamily.

It is found in the mitochondrion. This chain is Pentatricopeptide repeat-containing protein At2g27800, mitochondrial, found in Arabidopsis thaliana (Mouse-ear cress).